Consider the following 306-residue polypeptide: Probable zinc metalloprotease VDBG_06923 (306 aa).

The signal sequence occupies residues 1 to 28 (MNYEAEQPGANDDASGVAVALELARVLA). Zn(2+)-binding residues include Asp12 and Glu45. Asn60 carries an N-linked (GlcNAc...) asparagine glycan. Asp72 contacts Zn(2+). The 89-residue stretch at 218 to 306 (APAKVNNVRV…KSPVTIPFPT (89 aa)) folds into the Fibronectin type-III domain. 3 N-linked (GlcNAc...) asparagine glycosylation sites follow: Asn228, Asn234, and Asn244.

The protein belongs to the peptidase M28 family. M28B subfamily. Zn(2+) serves as cofactor.

It is found in the secreted. This chain is Probable zinc metalloprotease VDBG_06923, found in Verticillium alfalfae (strain VaMs.102 / ATCC MYA-4576 / FGSC 10136) (Verticillium wilt of alfalfa).